Reading from the N-terminus, the 252-residue chain is Imidazole glycerol phosphate synthase subunit HisF (252 aa).

Catalysis depends on residues Asp11 and Asp130.

The protein belongs to the HisA/HisF family. In terms of assembly, heterodimer of HisH and HisF.

The protein localises to the cytoplasm. The enzyme catalyses 5-[(5-phospho-1-deoxy-D-ribulos-1-ylimino)methylamino]-1-(5-phospho-beta-D-ribosyl)imidazole-4-carboxamide + L-glutamine = D-erythro-1-(imidazol-4-yl)glycerol 3-phosphate + 5-amino-1-(5-phospho-beta-D-ribosyl)imidazole-4-carboxamide + L-glutamate + H(+). Its pathway is amino-acid biosynthesis; L-histidine biosynthesis; L-histidine from 5-phospho-alpha-D-ribose 1-diphosphate: step 5/9. IGPS catalyzes the conversion of PRFAR and glutamine to IGP, AICAR and glutamate. The HisF subunit catalyzes the cyclization activity that produces IGP and AICAR from PRFAR using the ammonia provided by the HisH subunit. This is Imidazole glycerol phosphate synthase subunit HisF from Lactiplantibacillus plantarum (strain ATCC BAA-793 / NCIMB 8826 / WCFS1) (Lactobacillus plantarum).